Consider the following 373-residue polypeptide: Anhydro-N-acetylmuramic acid kinase (373 aa).

Gly12–Asp19 contacts ATP.

It belongs to the anhydro-N-acetylmuramic acid kinase family.

The catalysed reaction is 1,6-anhydro-N-acetyl-beta-muramate + ATP + H2O = N-acetyl-D-muramate 6-phosphate + ADP + H(+). The protein operates within amino-sugar metabolism; 1,6-anhydro-N-acetylmuramate degradation. Its pathway is cell wall biogenesis; peptidoglycan recycling. Its function is as follows. Catalyzes the specific phosphorylation of 1,6-anhydro-N-acetylmuramic acid (anhMurNAc) with the simultaneous cleavage of the 1,6-anhydro ring, generating MurNAc-6-P. Is required for the utilization of anhMurNAc either imported from the medium or derived from its own cell wall murein, and thus plays a role in cell wall recycling. In Erwinia tasmaniensis (strain DSM 17950 / CFBP 7177 / CIP 109463 / NCPPB 4357 / Et1/99), this protein is Anhydro-N-acetylmuramic acid kinase.